Consider the following 65-residue polypeptide: Light-harvesting protein B800/830/1020 beta-2 chain (65 aa).

The Cytoplasmic segment spans residues 1-17 (TDIRTGLTDEECQEIHE). H16 and N34 together coordinate a bacteriochlorophyll. The chain crosses the membrane as a helical span at residues 18-40 (MNMLGMHAYWSIGLIANALAYAW). Topologically, residues 41 to 65 (RPFHQGRAGNRLEDHAPDYVRSALT) are periplasmic.

Belongs to the antenna complex beta subunit family. In terms of assembly, the core complex is formed by different alpha and beta chains, binding bacteriochlorophyll molecules, and arranged most probably in tetrameric structures disposed around the reaction center. The non-pigmented gamma chains may constitute additional components.

The protein localises to the cell inner membrane. Its function is as follows. Antenna complexes are light-harvesting systems, which transfer the excitation energy to the reaction centers. This Halorhodospira halochloris (Ectothiorhodospira halochloris) protein is Light-harvesting protein B800/830/1020 beta-2 chain.